Here is an 873-residue protein sequence, read N- to C-terminus: F-BAR domain only protein 1 (873 aa).

The region spanning 1–248 is the F-BAR domain; that stretch reads MSYFGEHFWG…NVENVTVDML (248 aa). A mediates membrane-binding region spans residues 1–275; sequence MSYFGEHFWG…LDFDAYSSAA (275 aa). The interval 153 to 172 is disordered; it reads RENTSQKEMDKAETKSKKAA. Residues 155 to 178 are a coiled coil; that stretch reads NTSQKEMDKAETKSKKAADSLRRS. The segment at 267-439 is mediates interaction with the adaptor protein complex AP-2; that stretch reads DFDAYSSAAL…KSLFGPPLES (173 aa). Serine 295, serine 343, and serine 368 each carry phosphoserine. Positions 302 to 347 are disordered; it reads SVDFLESDSGVPPEVDDEGFTVRPDISQNNGAEPPRFSSSDSDFDD. 2 disordered regions span residues 381–600 and 813–833; these read GSLI…RGPS and SGHL…SPVA. The span at 447 to 466 shows a compositional bias: low complexity; the sequence is TGSSSLGFTSSPSPFSSSSP. Serine 518 bears the Phosphoserine mark. Over residues 567 to 576 the composition is skewed to low complexity; sequence SLSPSPLGSS. A mediates interaction with AGFG1, CALM, DAB2, EPS15, EPS15R, ITSN1 and clathrin region spans residues 593–873; the sequence is HGISRGPSPV…FATGMYLVSC (281 aa). The residue at position 600 (serine 600) is a Phosphoserine. Residues 609 to 872 form the MHD domain; the sequence is ALPVATAFTE…RFATGMYLVS (264 aa). Polar residues predominate over residues 816–827; that stretch reads LSASWQPQSGPS.

It belongs to the FCHO family. May oligomerize and form homotetramer. Interacts with AP2A2 and AP2B1; 2 subunits of the adaptor protein complex AP-2. Interacts with DAB2. Interacts with clathrin (CLTC or CLTCL1). Interacts with EPS15, EPS15R and ITSN1. Interacts with AGFG1 and CALM. May interact with ACVR1; linking this receptor to clathrin-mediated endocytosis. Mainly detected in brain and spleen.

The protein resides in the membrane. The protein localises to the clathrin-coated pit. Functions in an early step of clathrin-mediated endocytosis. Has both a membrane binding/bending activity and the ability to recruit proteins essential to the formation of functional clathrin-coated pits. May regulate Bmp signaling by regulating clathrin-mediated endocytosis of Bmp receptors. Involved in the regulation of T-cell poliferation and activation. Affects TCR clustering upon receptor triggering and modulates its internalisation, playing a role in TCR-dependent T-cell activation. The polypeptide is F-BAR domain only protein 1 (Mus musculus (Mouse)).